We begin with the raw amino-acid sequence, 310 residues long: Proline-rich 28 kDa antigen (310 aa).

A signal peptide spans 1–32 (MIQIARTWRVFAGGMATGFIGVVLVTAGKASA). Residues 278–310 (QAPAPAPGSAPVGLPGQAPGYPPAGTLTPVPPR) form a disordered region.

It to M.leprae ML0031.

The sequence is that of Proline-rich 28 kDa antigen (mtc28) from Mycobacterium bovis (strain ATCC BAA-935 / AF2122/97).